The following is a 120-amino-acid chain: Small ribosomal subunit protein uS13 (120 aa).

The disordered stretch occupies residues Arg93 to Ala120.

This sequence belongs to the universal ribosomal protein uS13 family. Part of the 30S ribosomal subunit. Forms a loose heterodimer with protein S19. Forms two bridges to the 50S subunit in the 70S ribosome.

Its function is as follows. Located at the top of the head of the 30S subunit, it contacts several helices of the 16S rRNA. In the 70S ribosome it contacts the 23S rRNA (bridge B1a) and protein L5 of the 50S subunit (bridge B1b), connecting the 2 subunits; these bridges are implicated in subunit movement. Contacts the tRNAs in the A and P-sites. This Sulfurovum sp. (strain NBC37-1) protein is Small ribosomal subunit protein uS13.